Consider the following 839-residue polypeptide: MPLGVRGTRREFRFPVWGLLLLALWMLPRALGVEEIPGPDSHEKQGFQIVTFKWHHVQDPYIIALWILVASLAKIVFHLSHKVTSVVPESALLIVLGLILGGIVWAADHIASFTLTPTVFFFYLLPPIVLDAGYFMPNRLFFGNLGTILLYAVIGTVWNAATTGLSLYGVYLSGIMGDLSIGLLDFLLFGSLIAAVDPVAVLAVFEEVHVNDVLFIIVFGESLLNDAVTVVLYNVFDSFVSLGADKVTGVDCVKGIVSFFVVSLGGTLIGIIFAFLLSLVTRFTKHVRIIEPGFVFIISYLSYLTSEMLSLSAILAITFCGICCQKYVKANISEQSATTVRYTMKMLASGAETIIFMFLGISAVDPAIWTWNTAFILLTLVFISVYRAIGVVLQTWLLNKYRMVQLEIIDQVVMSYGGLRGAVAYALVVLLDEKKVKEKNLFVSTTIIVVFFTVIFQGLTIKPLVQWLKVKKSEHREPKLNEKLHGRAFDHILSAIEDISGQIGHNYLRDKWSNFDRKVLSKLLMRRSAQKSRDRILNVFHELNLKDAISYVAEGERRGSLAFIRSPSTDNIVNVDFSTPRPSTVEASVSYLLRENVSTVCLDMQALEQRRKSIRDTEDTVTHHTLQQYLYKPRQEYKHLYSRHELTSNEDEKQDKEIFHRTMRKRLESFKSTKLGINQTKKTAKLYKRERGQKRRNSSIPNGKIPMESPTRDFTFKEKELEFSDPEETNEYEAEEMSGGIEFLANVTQDTATDSTTGIDNPVFSPEEDQSIFTKVPPWLSPEETVVPSQRARVQIPYSPSNFRRLTPIRLSTKSVDSFLLADSPEERPRSFLPESTHM.

A signal peptide spans 1 to 32 (MPLGVRGTRREFRFPVWGLLLLALWMLPRALG). At 33–56 (VEEIPGPDSHEKQGFQIVTFKWHH) the chain is on the extracellular side. The chain crosses the membrane as a helical span at residues 57 to 79 (VQDPYIIALWILVASLAKIVFHL). The Cytoplasmic portion of the chain corresponds to 80 to 87 (SHKVTSVV). The helical transmembrane segment at 88–107 (PESALLIVLGLILGGIVWAA) threads the bilayer. Over 108–116 (DHIASFTLT) the chain is Extracellular. A helical membrane pass occupies residues 117–134 (PTVFFFYLLPPIVLDAGY). At 135–137 (FMP) the chain is on the cytoplasmic side. The helical transmembrane segment at 138 to 173 (NRLFFGNLGTILLYAVIGTVWNAATTGLSLYGVYLS) threads the bilayer. 3 residues coordinate a 1,2-diacyl-sn-glycero-3-phospho-(1D-myo-inositol): Gly143, Gly146, and Thr147. Topologically, residues 174–186 (GIMGDLSIGLLDF) are extracellular. The chain crosses the membrane as a helical span at residues 187 to 208 (LLFGSLIAAVDPVAVLAVFEEV). Residues 209–210 (HV) lie on the Cytoplasmic side of the membrane. Residues 211 to 242 (NDVLFIIVFGESLLNDAVTVVLYNVFDSFVSL) traverse the membrane as a helical segment. The Extracellular segment spans residues 243–249 (GADKVTG). A helical membrane pass occupies residues 250–284 (VDCVKGIVSFFVVSLGGTLIGIIFAFLLSLVTRFT). Residues 285-286 (KH) lie on the Cytoplasmic side of the membrane. The chain crosses the membrane as a helical span at residues 287–309 (VRIIEPGFVFIISYLSYLTSEML). Residues 310–311 (SL) are Extracellular-facing. The chain crosses the membrane as a helical span at residues 312–328 (SAILAITFCGICCQKYV). The Cytoplasmic segment spans residues 329 to 335 (KANISEQ). The helical transmembrane segment at 336–364 (SATTVRYTMKMLASGAETIIFMFLGISAV) threads the bilayer. Topologically, residues 365–372 (DPAIWTWN) are extracellular. The helical transmembrane segment at 373-394 (TAFILLTLVFISVYRAIGVVLQ) threads the bilayer. The Cytoplasmic segment spans residues 395–407 (TWLLNKYRMVQLE). A 1,2-diacyl-sn-glycero-3-phospho-(1D-myo-inositol) is bound at residue Met403. A helical transmembrane segment spans residues 408–431 (IIDQVVMSYGGLRGAVAYALVVLL). Topologically, residues 432–438 (DEKKVKE) are extracellular. Residues 439–472 (KNLFVSTTIIVVFFTVIFQGLTIKPLVQWLKVKK) traverse the membrane as a helical segment. At 473–839 (SEHREPKLNE…RSFLPESTHM (367 aa)) the chain is on the cytoplasmic side. Positions 502, 503, and 505 each coordinate a 1,2-diacyl-sn-glycero-3-phospho-(1D-myo-inositol). 2 positions are modified to phosphoserine: Ser560 and Ser568. The tract at residues 581–595 (RPSTVEASVSYLLRE) is interaction with EZR. The interval 596-673 (NVSTVCLDMQ…RKRLESFKST (78 aa)) is interaction with NHERF4. Residues 597-701 (VSTVCLDMQA…GQKRRNSSIP (105 aa)) are interaction with AHCYL1. Phosphoserine is present on residues Ser598 and Ser613. At Ser669 the chain carries Phosphoserine; by SGK1. A compositionally biased stretch (basic residues) spans 688 to 697 (KRERGQKRRN). The disordered stretch occupies residues 688–710 (KRERGQKRRNSSIPNGKIPMESP). 3 positions are modified to phosphoserine: Ser724, Ser815, and Ser818.

Belongs to the monovalent cation:proton antiporter 1 (CPA1) transporter (TC 2.A.36) family. As to quaternary structure, homodimer. Found in the forms of complex and dynamic macromolecular complexes. Binds NHERF1 and NHERF2. Interacts with CHP1, CHP2 and SHANK2. Interacts with NHERF4 and interactions decrease in response to elevated calcium ion levels. Interacts with PDZK1 (via C-terminal PDZ domain). Interacts with AHCYL1; the interaction is required for SLC9A3 activity. Interacts with EZR; interaction targets SLC9A3 to the apical membrane. Interacts with SNX27 (via PDZ domains); directs SLC9A3 membrane insertion from early endosomes to the plasma membrane. In terms of processing, phosphorylated by PKA, which inhibits activity. Phosphorylation at Ser-669 by SGK1 is associated with increased abundance at the cell membrane.

The protein localises to the apical cell membrane. The protein resides in the cell membrane. It localises to the recycling endosome membrane. Its subcellular location is the early endosome membrane. The catalysed reaction is Na(+)(in) + H(+)(out) = Na(+)(out) + H(+)(in). With respect to regulation, seems to switch between active and inactive modes in response to various stimuli. Activated directly or indirectly by membrane phosphatidylinositol (PIs). Regulated by a variety of auxiliary proteins, which facilitate the maturation, cell surface expression and function of the transporter. Inhibited specifically by the drug tenapanor. Its function is as follows. Plasma membrane Na(+)/H(+) antiporter. Exchanges intracellular H(+) ions for extracellular Na(+) in 1:1 stoichiometry, playing a key role in salt and fluid absorption and pH homeostasis. Major apical Na(+)/H(+) exchanger in kidney and intestine playing an important role in renal and intestine Na(+) absorption and blood pressure regulation. The protein is Sodium/hydrogen exchanger 3 (SLC9A3) of Didelphis virginiana (North American opossum).